The chain runs to 170 residues: Macro domain-containing protein VPA0103 (170 aa).

The Macro domain maps to 1 to 170 (MNAISLVQGD…SIWQHALTQH (170 aa)).

Belongs to the MacroD-type family.

The chain is Macro domain-containing protein VPA0103 from Vibrio parahaemolyticus serotype O3:K6 (strain RIMD 2210633).